Here is a 594-residue protein sequence, read N- to C-terminus: Aspartate--tRNA(Asp/Asn) ligase (594 aa).

L-aspartate is bound at residue E176. Residues 200–203 (QIFK) are aspartate. R222 is an L-aspartate binding site. ATP is bound by residues 222 to 224 (RDE) and Q231. Residue H450 coordinates L-aspartate. Position 484 (E484) interacts with ATP. L-aspartate is bound at residue R491. 536 to 539 (GLDR) serves as a coordination point for ATP.

This sequence belongs to the class-II aminoacyl-tRNA synthetase family. Type 1 subfamily. In terms of assembly, homodimer.

It is found in the cytoplasm. It carries out the reaction tRNA(Asx) + L-aspartate + ATP = L-aspartyl-tRNA(Asx) + AMP + diphosphate. Aspartyl-tRNA synthetase with relaxed tRNA specificity since it is able to aspartylate not only its cognate tRNA(Asp) but also tRNA(Asn). Reaction proceeds in two steps: L-aspartate is first activated by ATP to form Asp-AMP and then transferred to the acceptor end of tRNA(Asp/Asn). The sequence is that of Aspartate--tRNA(Asp/Asn) ligase from Geobacillus sp. (strain WCH70).